Here is a 257-residue protein sequence, read N- to C-terminus: UPF0246 protein Sputcn32_1053 (257 aa).

The protein belongs to the UPF0246 family.

The sequence is that of UPF0246 protein Sputcn32_1053 from Shewanella putrefaciens (strain CN-32 / ATCC BAA-453).